Here is a 434-residue protein sequence, read N- to C-terminus: Threonylcarbamoyladenosine tRNA methylthiotransferase MtaB (434 aa).

One can recognise an MTTase N-terminal domain in the interval 2–112 (KTVRIETFGC…IVDHINSLNG (111 aa)). [4Fe-4S] cluster is bound by residues cysteine 11, cysteine 46, cysteine 77, cysteine 147, cysteine 151, and cysteine 154. The Radical SAM core domain occupies 133–362 (FEDRTRSYIK…KEKAKDVSIR (230 aa)).

Belongs to the methylthiotransferase family. MtaB subfamily. [4Fe-4S] cluster is required as a cofactor.

It is found in the cytoplasm. It carries out the reaction N(6)-L-threonylcarbamoyladenosine(37) in tRNA + (sulfur carrier)-SH + AH2 + 2 S-adenosyl-L-methionine = 2-methylsulfanyl-N(6)-L-threonylcarbamoyladenosine(37) in tRNA + (sulfur carrier)-H + 5'-deoxyadenosine + L-methionine + A + S-adenosyl-L-homocysteine + 2 H(+). Catalyzes the methylthiolation of N6-threonylcarbamoyladenosine (t(6)A), leading to the formation of 2-methylthio-N6-threonylcarbamoyladenosine (ms(2)t(6)A) at position 37 in tRNAs that read codons beginning with adenine. The protein is Threonylcarbamoyladenosine tRNA methylthiotransferase MtaB (mtaB) of Thermotoga maritima (strain ATCC 43589 / DSM 3109 / JCM 10099 / NBRC 100826 / MSB8).